The chain runs to 693 residues: Glycine--tRNA ligase beta subunit (693 aa).

This sequence belongs to the class-II aminoacyl-tRNA synthetase family. As to quaternary structure, tetramer of two alpha and two beta subunits.

It localises to the cytoplasm. The catalysed reaction is tRNA(Gly) + glycine + ATP = glycyl-tRNA(Gly) + AMP + diphosphate. This Natranaerobius thermophilus (strain ATCC BAA-1301 / DSM 18059 / JW/NM-WN-LF) protein is Glycine--tRNA ligase beta subunit.